The following is a 389-amino-acid chain: Succinate--CoA ligase [ADP-forming] subunit beta (389 aa).

The ATP-grasp domain maps to R9–K236. Residues K45, G52–G54, A94, and E99 each bind ATP. Mg(2+) is bound by residues N191 and D205. Substrate is bound by residues N256 and G318–T320.

Belongs to the succinate/malate CoA ligase beta subunit family. In terms of assembly, heterotetramer of two alpha and two beta subunits. It depends on Mg(2+) as a cofactor.

It catalyses the reaction succinate + ATP + CoA = succinyl-CoA + ADP + phosphate. The catalysed reaction is GTP + succinate + CoA = succinyl-CoA + GDP + phosphate. The protein operates within carbohydrate metabolism; tricarboxylic acid cycle; succinate from succinyl-CoA (ligase route): step 1/1. Succinyl-CoA synthetase functions in the citric acid cycle (TCA), coupling the hydrolysis of succinyl-CoA to the synthesis of either ATP or GTP and thus represents the only step of substrate-level phosphorylation in the TCA. The beta subunit provides nucleotide specificity of the enzyme and binds the substrate succinate, while the binding sites for coenzyme A and phosphate are found in the alpha subunit. The polypeptide is Succinate--CoA ligase [ADP-forming] subunit beta (Arthrobacter sp. (strain FB24)).